A 185-amino-acid chain; its full sequence is Translocon-associated protein subunit gamma (185 aa).

Position 1 is an N-acetylmethionine (M1). The Lumenal segment spans residues 1 to 27 (MAPKGSCKQQSEEDLLLQDFSRNLSAK). S11 carries the post-translational modification Phosphoserine. Residues 28-48 (SSALFFGNAFIVSAIPIWLYW) form a helical membrane-spanning segment. The Cytoplasmic segment spans residues 49 to 54 (RIWHMD). The chain crosses the membrane as a helical span at residues 55–76 (LIQSAVLYSVMTLVSTYLVAFA). Over 77–135 (YKNVKFVLKHKVAQKREDAVSKEVTRKLSEADNRKMSRKEKDERILWKKNEVADYEATT) the chain is Lumenal. Position 105 is a phosphoserine (S105). The chain crosses the membrane as a helical span at residues 136-157 (FSIFYNNTLFLVVVIVASFFIL). At 158–163 (KNFNPT) the chain is on the cytoplasmic side. Residues 164–184 (VNYILSISASSGLIALLSTGS) traverse the membrane as a helical segment.

It belongs to the TRAP-gamma family. Heterotetramer of TRAP-alpha, TRAP-beta, TRAP-delta and TRAP-gamma.

Its subcellular location is the endoplasmic reticulum membrane. TRAP proteins are part of a complex whose function is to bind calcium to the ER membrane and thereby regulate the retention of ER resident proteins. This chain is Translocon-associated protein subunit gamma (SSR3), found in Pongo abelii (Sumatran orangutan).